A 78-amino-acid polypeptide reads, in one-letter code: Omega-conotoxin-like 2 (78 aa).

Positions 1-22 are cleaved as a signal peptide; it reads MKLTCVVIVAVLLLTACQLITA. A propeptide spanning residues 23 to 42 is cleaved from the precursor; the sequence is DDSRGTQKHRSLRSTTKVSK. Intrachain disulfides connect C46/C62, C53/C65, and C61/C72.

It belongs to the conotoxin O1 superfamily. In terms of tissue distribution, expressed by the venom duct.

The protein localises to the secreted. Functionally, omega-conotoxins act at presynaptic membranes, they bind and block voltage-gated calcium channels (Cav). This chain is Omega-conotoxin-like 2, found in Conus striatus (Striated cone).